A 313-amino-acid chain; its full sequence is Homoserine O-succinyltransferase (313 aa).

Cys-142 (acyl-thioester intermediate) is an active-site residue. Substrate is bound by residues Lys-163 and Ser-192. His-235 functions as the Proton acceptor in the catalytic mechanism. Residue Glu-237 is part of the active site. Arg-249 is a binding site for substrate.

This sequence belongs to the MetA family.

Its subcellular location is the cytoplasm. It catalyses the reaction L-homoserine + succinyl-CoA = O-succinyl-L-homoserine + CoA. It participates in amino-acid biosynthesis; L-methionine biosynthesis via de novo pathway; O-succinyl-L-homoserine from L-homoserine: step 1/1. In terms of biological role, transfers a succinyl group from succinyl-CoA to L-homoserine, forming succinyl-L-homoserine. This is Homoserine O-succinyltransferase from Vibrio atlanticus (strain LGP32) (Vibrio splendidus (strain Mel32)).